Reading from the N-terminus, the 465-residue chain is Dihydrolipoyllysine-residue acetyltransferase component 5 of pyruvate dehydrogenase complex, chloroplastic (465 aa).

The N-terminal 31 residues, 1–31 (MSRLLQTPFLPSVSLPTKTRSSVTGFRVKPR), are a transit peptide targeting the chloroplast. A Lipoyl-binding domain is found at 39 to 114 (IREIFMPALS…PVGSAIALLA (76 aa)). Position 80 is an N6-lipoyllysine (Lys-80). Positions 123–148 (AKAKASGGGGGGDSKAPPASPPTAAV) are disordered. Positions 136 to 148 (SKAPPASPPTAAV) are enriched in low complexity. The Peripheral subunit-binding (PSBD) domain maps to 184–221 (VASPYAKKLAKELKVELAGLVGSGPMGRIVAKDVEAVA). His-438 is a catalytic residue.

Belongs to the 2-oxoacid dehydrogenase family. (R)-lipoate is required as a cofactor.

The protein resides in the plastid. It localises to the chloroplast stroma. The catalysed reaction is N(6)-[(R)-dihydrolipoyl]-L-lysyl-[protein] + acetyl-CoA = N(6)-[(R)-S(8)-acetyldihydrolipoyl]-L-lysyl-[protein] + CoA. The pyruvate dehydrogenase complex catalyzes the overall conversion of pyruvate to acetyl-CoA and CO(2). It contains multiple copies of three enzymatic components: pyruvate dehydrogenase (E1), dihydrolipoamide acetyltransferase (E2) and lipoamide dehydrogenase (E3). The sequence is that of Dihydrolipoyllysine-residue acetyltransferase component 5 of pyruvate dehydrogenase complex, chloroplastic (EMB3003) from Arabidopsis thaliana (Mouse-ear cress).